Reading from the N-terminus, the 546-residue chain is EH domain-containing protein 2 (546 aa).

EF-hand domains follow at residues 15–50 (EHQK…SKLS) and 51–84 (RQEL…VSLA). The EH domain occupies 16-94 (HQKIYKEWFN…QEGHEITSDL (79 aa)). Ca(2+) contacts are provided by Asp-28, Asp-30, Asp-32, Arg-34, Asp-39, Asp-62, and Glu-73. In terms of domain architecture, Dynamin-type G spans 194–430 (FDAKPMVMLL…LLADLMDVPK (237 aa)). The G1 motif stretch occupies residues 204 to 211 (GQYSTGKT). 204 to 211 (GQYSTGKT) is a GTP binding site. The G2 motif stretch occupies residues 230–231 (EP). Residues 292–295 (DTPG) are G3 motif. Residues 292–296 (DTPGV) and Lys-359 contribute to the GTP site. The interval 358–361 (NKAD) is G4 motif. A region of interest (G5 motif) is located at residue Val-382. 395–398 (SFND) provides a ligand contact to GTP. The Nuclear localization signal motif lies at 429–436 (PKKACDRK). A coiled-coil region spans residues 467-490 (KSKAQQRLMDNLEEEFGKVQREFH).

The protein belongs to the TRAFAC class dynamin-like GTPase superfamily. Dynamin/Fzo/YdjA family. EHD subfamily. As to quaternary structure, homooligomer, and heterooligomer with EHD1. Interacts with AP-4 complex subunit sigma (At2g19790).

It is found in the endosome membrane. The protein localises to the cell membrane. It localises to the nucleus. Its subcellular location is the cytoplasm. It catalyses the reaction GTP + H2O = GDP + phosphate + H(+). Involved in endocytosis negative regulation, probably by influencing actin organization. Acts in early endocytic membrane fusion and membrane trafficking of recycling endosomes. Exhibits an inhibitory effect on endocytosis when over-expressed. The polypeptide is EH domain-containing protein 2 (Arabidopsis thaliana (Mouse-ear cress)).